A 246-amino-acid chain; its full sequence is MyoD family inhibitor domain-containing protein (246 aa).

A disordered region spans residues 1-71 (MSGAGEALAP…WGNPSDGELI (71 aa)). Residues 33 to 43 (KCDKDNTEKDI) show a composition bias toward basic and acidic residues. Over residues 44 to 63 (TQATNSHFTHGEMQDQSIWG) the composition is skewed to polar residues. Residues 74–246 (QPQRLPQLQT…MECCGICFPS (173 aa)) form the MDFI domain. Serine 128, serine 140, and serine 143 each carry phosphoserine.

The protein belongs to the MDFI family. In terms of assembly, interacts with HAND1; the interaction sequesters HAND1 into the nucleolus and inhibits its activity. Interacts (via C-terminus) with ZIC2. Interacts (via C-terminus) with AXIN1, the histidine-rich region of CCNT1/cyclin-T and weakly with LEF1. Interacts with CCNT2. Interacts with GATA2. Interacts (via C-terminus) with Piezo channel composed of PIEZO1 or PIEZO2; the interaction prolongs Piezo channel inactivation. As to quaternary structure, (Microbial infection) Interacts (via C-terminus) with HIV-1 Tat and Rev. In terms of processing, palmitoylated. Expressed in lymphatic tissues. Detected in the spleen, thymus, peripheral blood leukocytes as well as prostate, uterus and small intestine. Expressed in lymphatic endothelial cells.

Its subcellular location is the nucleus. The protein localises to the nucleolus. It localises to the cytoplasm. The protein resides in the secreted. Required to control the activity of various transcription factors through their sequestration in the cytoplasm. Retains nuclear Zic proteins ZIC1, ZIC2 and ZIC3 in the cytoplasm and inhibits their transcriptional activation. Modulates the expression from cellular promoters. Binds to the axin complex, resulting in an increase in the level of free beta-catenin. Affects axin regulation of the WNT and JNK signaling pathways. Involved in the development of lymphatic vessel valves. Required to promote lymphatic endothelial cell migration, in a process that involves down-regulation of integrin beta 1 activation and control of cell adhesion to the extracellular matrix. Regulates the activity of mechanosensitive Piezo channel. Its function is as follows. (Microbial infection) Modulates the expression from viral promoters. Down-regulates Tat-dependent transcription of the human immunodeficiency virus type 1 (HIV-1) LTR by interacting with HIV-1 Tat and Rev and impairing their nuclear import, probably by rendering the NLS domains inaccessible to importin-beta. Also stimulates activation of human T-cell leukemia virus type I (HTLV-I) LTR. The chain is MyoD family inhibitor domain-containing protein from Homo sapiens (Human).